A 282-amino-acid polypeptide reads, in one-letter code: Fused uL13/uS9 ribosomal subunit protein (282 aa).

Residues 1-141 (MLLMIINGEG…LGEISELLGA (141 aa)) are large ribosomal subunit protein uL13. Residues 150–282 (MKKVIHTSGK…ARARRQKSYR (133 aa)) are small ribosomal subunit protein uS9. The tract at residues 259–282 (DPRRSEPKKYGGRGARARRQKSYR) is disordered. Residues 273–282 (ARARRQKSYR) are compositionally biased toward basic residues.

This sequence in the N-terminal section; belongs to the universal ribosomal protein uL13 family. In the C-terminal section; belongs to the universal ribosomal protein uS9 family. L13 is part of the 50S ribosomal subunit. S9 is part of the 30S ribosomal subunit.

L13 protein is one of the early assembly proteins of the 50S ribosomal subunit, although it is not seen to bind rRNA by itself. It is important during the early stages of 50S assembly. This Methanothermobacter thermautotrophicus (strain ATCC 29096 / DSM 1053 / JCM 10044 / NBRC 100330 / Delta H) (Methanobacterium thermoautotrophicum) protein is Fused uL13/uS9 ribosomal subunit protein (rpl13/rps9).